A 159-amino-acid polypeptide reads, in one-letter code: Phosphopantetheine adenylyltransferase (159 aa).

T10 contacts substrate. Residues 10–11 (TF) and H18 each bind ATP. Substrate-binding residues include K42, M74, and R88. Residues 89 to 91 (GLR), E99, and 124 to 130 (WSFISSS) each bind ATP.

Belongs to the bacterial CoaD family. As to quaternary structure, homohexamer. Mg(2+) serves as cofactor.

It localises to the cytoplasm. It catalyses the reaction (R)-4'-phosphopantetheine + ATP + H(+) = 3'-dephospho-CoA + diphosphate. The protein operates within cofactor biosynthesis; coenzyme A biosynthesis; CoA from (R)-pantothenate: step 4/5. Reversibly transfers an adenylyl group from ATP to 4'-phosphopantetheine, yielding dephospho-CoA (dPCoA) and pyrophosphate. The protein is Phosphopantetheine adenylyltransferase of Escherichia coli O7:K1 (strain IAI39 / ExPEC).